The following is a 254-amino-acid chain: Zinc import ATP-binding protein ZnuC (254 aa).

The ABC transporter domain maps to V5 to P219. G37–S44 lines the ATP pocket. Positions C233 to P242 are enriched in basic and acidic residues. Residues C233 to Q254 are disordered.

It belongs to the ABC transporter superfamily. Zinc importer (TC 3.A.1.15.5) family. In terms of assembly, the complex is composed of two ATP-binding proteins (ZnuC), two transmembrane proteins (ZnuB) and a solute-binding protein (ZnuA).

The protein resides in the cell inner membrane. The catalysed reaction is Zn(2+)(out) + ATP(in) + H2O(in) = Zn(2+)(in) + ADP(in) + phosphate(in) + H(+)(in). Functionally, part of the ABC transporter complex ZnuABC involved in zinc import. Responsible for energy coupling to the transport system. The chain is Zinc import ATP-binding protein ZnuC from Aeromonas hydrophila subsp. hydrophila (strain ATCC 7966 / DSM 30187 / BCRC 13018 / CCUG 14551 / JCM 1027 / KCTC 2358 / NCIMB 9240 / NCTC 8049).